Reading from the N-terminus, the 279-residue chain is Putative ABC transporter ATP-binding protein CA_C1368 (279 aa).

Residues 4 to 239 form the ABC transporter domain; sequence ISINNVDYIY…KKVLRNINLR (236 aa). 37 to 44 provides a ligand contact to ATP; sequence GPNGAGKS.

It belongs to the ABC transporter superfamily.

It is found in the cell membrane. Probably part of an ABC transporter complex. Responsible for energy coupling to the transport system. This Clostridium acetobutylicum (strain ATCC 824 / DSM 792 / JCM 1419 / IAM 19013 / LMG 5710 / NBRC 13948 / NRRL B-527 / VKM B-1787 / 2291 / W) protein is Putative ABC transporter ATP-binding protein CA_C1368.